Here is a 254-residue protein sequence, read N- to C-terminus: Type III pantothenate kinase (254 aa).

6 to 13 serves as a coordination point for ATP; it reads DVGNSNIV. Substrate contacts are provided by residues Tyr-100 and 107-110; that span reads GADR. Asp-109 (proton acceptor) is an active-site residue. Position 129 (Asp-129) interacts with K(+). Thr-132 contributes to the ATP binding site. Thr-184 is a substrate binding site.

It belongs to the type III pantothenate kinase family. As to quaternary structure, homodimer. NH4(+) is required as a cofactor. Requires K(+) as cofactor.

It is found in the cytoplasm. It carries out the reaction (R)-pantothenate + ATP = (R)-4'-phosphopantothenate + ADP + H(+). Its pathway is cofactor biosynthesis; coenzyme A biosynthesis; CoA from (R)-pantothenate: step 1/5. Its function is as follows. Catalyzes the phosphorylation of pantothenate (Pan), the first step in CoA biosynthesis. The sequence is that of Type III pantothenate kinase from Citrifermentans bemidjiense (strain ATCC BAA-1014 / DSM 16622 / JCM 12645 / Bem) (Geobacter bemidjiensis).